The sequence spans 229 residues: UPF0758 protein Mbur_0382 (229 aa).

An MPN domain is found at 106-228 (KIRSANDVYS…YVSLKEEGYI (123 aa)). Zn(2+) contacts are provided by His-177, His-179, and Asp-190. The short motif at 177–190 (HNHPSGDPAPSRED) is the JAMM motif element.

Belongs to the UPF0758 family.

The protein is UPF0758 protein Mbur_0382 of Methanococcoides burtonii (strain DSM 6242 / NBRC 107633 / OCM 468 / ACE-M).